Reading from the N-terminus, the 372-residue chain is Cytochrome b (372 aa).

Transmembrane regions (helical) follow at residues 25–45, 69–90, 105–125, and 170–190; these read FGSM…FLAI, WMMQ…YIHI, WLSG…GYVL, and FFAL…IHIM. The heme b site is built by H75 and H89. Positions 174 and 188 each coordinate heme b. H193 provides a ligand contact to a ubiquinone. 4 helical membrane-spanning segments follow: residues 218 to 238, 280 to 300, 312 to 332, and 339 to 358; these read HKDM…MSFT, LGGT…PFTH, LMQF…WAAT, and FTSI…TMNP.

Belongs to the cytochrome b family. The cytochrome bc1 complex contains 3 respiratory subunits (MT-CYB, CYC1 and UQCRFS1), 2 core proteins (UQCRC1 and UQCRC2) and probably 6 low-molecular weight proteins. Requires heme b as cofactor.

It localises to the mitochondrion inner membrane. Component of the ubiquinol-cytochrome c reductase complex (complex III or cytochrome b-c1 complex) that is part of the mitochondrial respiratory chain. The b-c1 complex mediates electron transfer from ubiquinol to cytochrome c. Contributes to the generation of a proton gradient across the mitochondrial membrane that is then used for ATP synthesis. The protein is Cytochrome b (MT-CYB) of Pantherophis vulpinus (Western fox snake).